We begin with the raw amino-acid sequence, 421 residues long: Serine hydroxymethyltransferase (421 aa).

(6S)-5,6,7,8-tetrahydrofolate-binding positions include L121 and G125–L127. At K229 the chain carries N6-(pyridoxal phosphate)lysine.

This sequence belongs to the SHMT family. As to quaternary structure, homodimer. It depends on pyridoxal 5'-phosphate as a cofactor.

The protein localises to the cytoplasm. It catalyses the reaction (6R)-5,10-methylene-5,6,7,8-tetrahydrofolate + glycine + H2O = (6S)-5,6,7,8-tetrahydrofolate + L-serine. Its pathway is one-carbon metabolism; tetrahydrofolate interconversion. It functions in the pathway amino-acid biosynthesis; glycine biosynthesis; glycine from L-serine: step 1/1. Catalyzes the reversible interconversion of serine and glycine with tetrahydrofolate (THF) serving as the one-carbon carrier. This reaction serves as the major source of one-carbon groups required for the biosynthesis of purines, thymidylate, methionine, and other important biomolecules. Also exhibits THF-independent aldolase activity toward beta-hydroxyamino acids, producing glycine and aldehydes, via a retro-aldol mechanism. This is Serine hydroxymethyltransferase from Actinobacillus pleuropneumoniae serotype 5b (strain L20).